The primary structure comprises 417 residues: NADH-quinone oxidoreductase subunit D (417 aa).

Belongs to the complex I 49 kDa subunit family. NDH-1 is composed of 14 different subunits. Subunits NuoB, C, D, E, F, and G constitute the peripheral sector of the complex.

It is found in the cell inner membrane. The catalysed reaction is a quinone + NADH + 5 H(+)(in) = a quinol + NAD(+) + 4 H(+)(out). NDH-1 shuttles electrons from NADH, via FMN and iron-sulfur (Fe-S) centers, to quinones in the respiratory chain. The immediate electron acceptor for the enzyme in this species is believed to be ubiquinone. Couples the redox reaction to proton translocation (for every two electrons transferred, four hydrogen ions are translocated across the cytoplasmic membrane), and thus conserves the redox energy in a proton gradient. The protein is NADH-quinone oxidoreductase subunit D of Polaromonas sp. (strain JS666 / ATCC BAA-500).